The following is a 316-amino-acid chain: Calumenin-B (316 aa).

A signal peptide spans 1-19 (MELRPLVMCFALCVVYASS). EF-hand domains are found at residues 69–104 (ESKE…SQKR), 105–140 (WIYD…YILD), 152–187 (QMIS…EEYD), 189–224 (MKDI…QEGD), 230–265 (WVRT…SDYD), and 266–301 (HAEA…FVGS). Positions 82, 84, 86, 88, 93, 118, 120, 122, and 129 each coordinate Ca(2+). N-linked (GlcNAc...) asparagine glycosylation is present at Asn132. 19 residues coordinate Ca(2+): Asp165, Asp167, Asp169, Lys171, Glu176, Asp202, Asn204, Asp206, Glu213, Asp243, Asn245, Asp247, Arg249, Glu254, Asp279, Asp281, Asp283, Lys285, and Glu290. Positions 313–316 (HDEF) match the Prevents secretion from ER motif.

It belongs to the CREC family. As to quaternary structure, interacts with ggcx.

It localises to the endoplasmic reticulum membrane. Its subcellular location is the golgi apparatus. The protein localises to the secreted. The protein resides in the melanosome. It is found in the sarcoplasmic reticulum lumen. Involved in regulation of vitamin K-dependent carboxylation of multiple N-terminal glutamate residues. Seems to inhibit gamma-carboxylase ggcx. Binds 7 calcium ions with a low affinity. In Salmo salar (Atlantic salmon), this protein is Calumenin-B (calub).